The chain runs to 356 residues: Tyrosine recombinase XerS (356 aa).

Residues 16–121 (IMPWYVLDYY…ALSSLYKYLT (106 aa)) enclose the Core-binding (CB) domain. The Tyr recombinase domain occupies 169–354 (AFLDYVDKEY…VNDEQKNALD (186 aa)). Residues Arg-210, Lys-234, His-306, Arg-309, and His-332 contribute to the active site. The active-site O-(3'-phospho-DNA)-tyrosine intermediate is Tyr-341.

This sequence belongs to the 'phage' integrase family. XerS subfamily.

The protein resides in the cytoplasm. Its activity is regulated as follows. FtsK is required for recombination. Site-specific tyrosine recombinase, which acts by catalyzing the cutting and rejoining of the recombining DNA molecules. Essential to convert dimers of the bacterial chromosome into monomers to permit their segregation at cell division. This chain is Tyrosine recombinase XerS, found in Streptococcus pyogenes serotype M6 (strain ATCC BAA-946 / MGAS10394).